A 200-amino-acid chain; its full sequence is 3-isopropylmalate dehydratase small subunit (200 aa).

It belongs to the LeuD family. LeuD type 1 subfamily. As to quaternary structure, heterodimer of LeuC and LeuD.

The enzyme catalyses (2R,3S)-3-isopropylmalate = (2S)-2-isopropylmalate. It functions in the pathway amino-acid biosynthesis; L-leucine biosynthesis; L-leucine from 3-methyl-2-oxobutanoate: step 2/4. Its function is as follows. Catalyzes the isomerization between 2-isopropylmalate and 3-isopropylmalate, via the formation of 2-isopropylmaleate. This chain is 3-isopropylmalate dehydratase small subunit, found in Campylobacter jejuni subsp. jejuni serotype O:6 (strain 81116 / NCTC 11828).